A 790-amino-acid polypeptide reads, in one-letter code: F-box and leucine-rich repeat protein 13 (790 aa).

The region spanning 237-283 (AFDISVLPEQAILQIFLYLTFKDMMACSRVNRSWMAMIQRGSLWNSI) is the F-box domain. LRR repeat units follow at residues 503 to 525 (QLTV…HFFD), 531 to 552 (RLRE…IRLS), 557 to 579 (NLHY…YIAS), 582 to 602 (SLIS…TILS), 606 to 628 (KLRE…AYCK), and 632 to 657 (LLEH…IFCT).

Belongs to the DRC6 family. In terms of assembly, component of the nexin-dynein regulatory complex (N-DRC). Directly interacts with SKP1 and CUL1. Interacts with TCTE1/DRC5.

It is found in the cytoplasm. Its subcellular location is the cytoskeleton. It localises to the flagellum axoneme. The protein localises to the microtubule organizing center. The protein resides in the centrosome. Its function is as follows. Substrate-recognition component of the SCF (SKP1-CUL1-F-box protein)-type E3 ubiquitin ligase complex. Component of the nexin-dynein regulatory complex (N-DRC), a key regulator of ciliary/flagellar motility which maintains the alignment and integrity of the distal axoneme and regulates microtubule sliding in motile axonemes. Specifically targets CEP192 isoform 3 for ubiquitin-mediated proteolysis and thereby acts as a regulator of microtubule nucleation activity. This is F-box and leucine-rich repeat protein 13 (Fbxl13) from Mus musculus (Mouse).